The chain runs to 107 residues: Proteinase inhibitor I-A (107 aa).

Positions 1–22 (MVKFAHVVAFLLLASLIQPLTA) are cleaved as a signal peptide. A propeptide spanning residues 23–36 (RDLEINVLQLDVSQ) is cleaved from the precursor.

This sequence belongs to the protease inhibitor I13 (potato type I serine protease inhibitor) family.

It is found in the secreted. The polypeptide is Proteinase inhibitor I-A (TIMPB) (Nicotiana tabacum (Common tobacco)).